We begin with the raw amino-acid sequence, 505 residues long: Glutamate--tRNA ligase (505 aa).

The 'HIGH' region motif lies at 12 to 22 (PSPTGDPHVGT). The 'KMSKS' region signature appears at 253–257 (KLSKR). Lys-256 contacts ATP.

Belongs to the class-I aminoacyl-tRNA synthetase family. Glutamate--tRNA ligase type 1 subfamily. In terms of assembly, monomer.

The protein localises to the cytoplasm. The catalysed reaction is tRNA(Glu) + L-glutamate + ATP = L-glutamyl-tRNA(Glu) + AMP + diphosphate. Functionally, catalyzes the attachment of glutamate to tRNA(Glu) in a two-step reaction: glutamate is first activated by ATP to form Glu-AMP and then transferred to the acceptor end of tRNA(Glu). The protein is Glutamate--tRNA ligase of Chlamydophila psittaci (strain ATCC VR-125 / 6BC) (Chlamydia psittaci).